Reading from the N-terminus, the 363-residue chain is Suberization-associated anionic peroxidase (363 aa).

Positions 1–20 (MGFRLSHLSLALSFVALALA) are cleaved as a signal peptide. The N-linked (GlcNAc...) asparagine glycan is linked to Asn36. Intrachain disulfides connect Cys80-Cys159 and Cys111-Cys116. His109 functions as the Proton acceptor in the catalytic mechanism. Ca(2+) is bound by residues Asp110, Val113, Gly115, and Asp117. N-linked (GlcNAc...) asparagine glycosylation is found at Asn126, Asn161, and Asn199. Cystine bridges form between Cys166-Cys352 and Cys245-Cys264. A substrate-binding site is contributed by Pro208. Residues Asn213 and Asn225 are each glycosylated (N-linked (GlcNAc...) asparagine). His238 contacts heme b. Thr239 contributes to the Ca(2+) binding site. N-linked (GlcNAc...) asparagine glycosylation occurs at Asn263. 3 residues coordinate Ca(2+): Asp277, Thr279, and Asp284.

The protein belongs to the peroxidase family. Classical plant (class III) peroxidase subfamily. Requires Ca(2+) as cofactor. Heme b is required as a cofactor.

It is found in the secreted. The catalysed reaction is 2 a phenolic donor + H2O2 = 2 a phenolic radical donor + 2 H2O. Removal of H(2)O(2), oxidation of toxic reductants, biosynthesis and degradation of lignin, suberization, auxin catabolism, response to environmental stresses such as wounding, pathogen attack and oxidative stress. These functions might be dependent on each isozyme/isoform in each plant tissue. Functionally, suggested to catalyze the deposition of the aromatic residues of suberin on the cell wall and thus play a role in cell-suberization. The polypeptide is Suberization-associated anionic peroxidase (Solanum tuberosum (Potato)).